Here is a 212-residue protein sequence, read N- to C-terminus: Ropporin-1B (212 aa).

Residues 12-49 enclose the RIIa domain; the sequence is PELPKMLKEFAKAAIRAQPQDLIQWGADYFEALSRGET. Ser-56 carries the post-translational modification Phosphoserine. Positions 209 to 212 are interaction with RHPN1; that stretch reads VWLE.

The protein belongs to the ropporin family. Homodimer. Interacts with RHPN1. May interact with SPA17. Interacts with AKAP3. Interacts with FSCB; the interaction increases upon spermatozoa capacitation conditions. In terms of processing, sumoylated, sumoylation decreases upon spermatozoa capacitation conditions.

It is found in the cell projection. Its subcellular location is the cilium. The protein resides in the flagellum. In terms of biological role, important for male fertility. With ROPN1L, involved in fibrous sheath integrity and sperm motility, plays a role in PKA-dependent signaling processes required for spermatozoa capacitation. This chain is Ropporin-1B (ROPN1B), found in Homo sapiens (Human).